The following is a 493-amino-acid chain: Glycerol kinase (493 aa).

Thr-11 is a binding site for ADP. Thr-11, Thr-12, and Ser-13 together coordinate ATP. Residue Thr-11 participates in sn-glycerol 3-phosphate binding. An ADP-binding site is contributed by Arg-15. Residues Arg-80, Glu-81, Tyr-132, and Asp-241 each contribute to the sn-glycerol 3-phosphate site. Glycerol contacts are provided by Arg-80, Glu-81, Tyr-132, Asp-241, and Gln-242. Thr-263 and Gly-306 together coordinate ADP. Residues Thr-263, Gly-306, Gln-310, and Gly-408 each coordinate ATP. Gly-408 is a binding site for ADP.

Belongs to the FGGY kinase family.

The catalysed reaction is glycerol + ATP = sn-glycerol 3-phosphate + ADP + H(+). It participates in polyol metabolism; glycerol degradation via glycerol kinase pathway; sn-glycerol 3-phosphate from glycerol: step 1/1. With respect to regulation, inhibited by fructose 1,6-bisphosphate (FBP). Functionally, key enzyme in the regulation of glycerol uptake and metabolism. Catalyzes the phosphorylation of glycerol to yield sn-glycerol 3-phosphate. This chain is Glycerol kinase, found in Cereibacter sphaeroides (strain ATCC 17023 / DSM 158 / JCM 6121 / CCUG 31486 / LMG 2827 / NBRC 12203 / NCIMB 8253 / ATH 2.4.1.) (Rhodobacter sphaeroides).